Reading from the N-terminus, the 409-residue chain is Serine/threonine transporter SstT (409 aa).

9 helical membrane passes run 17 to 37, 49 to 69, 83 to 103, 142 to 162, 180 to 200, 218 to 238, 301 to 321, 331 to 351, and 357 to 377; these read LVGQ…FFPA, FVSA…MASI, ILLL…IASF, ALIS…GIAF, VSLI…GLVA, LVVL…LIVF, GAAI…GIAV, VVAS…LLLI, and LFGI…IIAI.

The protein belongs to the dicarboxylate/amino acid:cation symporter (DAACS) (TC 2.A.23) family.

It localises to the cell inner membrane. The catalysed reaction is L-serine(in) + Na(+)(in) = L-serine(out) + Na(+)(out). It catalyses the reaction L-threonine(in) + Na(+)(in) = L-threonine(out) + Na(+)(out). Its function is as follows. Involved in the import of serine and threonine into the cell, with the concomitant import of sodium (symport system). The polypeptide is Serine/threonine transporter SstT (Pseudomonas aeruginosa (strain UCBPP-PA14)).